Here is a 439-residue protein sequence, read N- to C-terminus: tRNA-2-methylthio-N(6)-dimethylallyladenosine synthase (439 aa).

In terms of domain architecture, MTTase N-terminal spans 2–119 (KYIYIKTWGC…LAQMIDKVEK (118 aa)). 6 residues coordinate [4Fe-4S] cluster: Cys11, Cys48, Cys82, Cys156, Cys160, and Cys163. One can recognise a Radical SAM core domain in the interval 142–374 (KKTGYTASIS…QNCINKQTMS (233 aa)). The TRAM domain maps to 377–439 (RKMLKSTQSV…HTHSLQGELI (63 aa)).

The protein belongs to the methylthiotransferase family. MiaB subfamily. Monomer. [4Fe-4S] cluster is required as a cofactor.

It localises to the cytoplasm. The catalysed reaction is N(6)-dimethylallyladenosine(37) in tRNA + (sulfur carrier)-SH + AH2 + 2 S-adenosyl-L-methionine = 2-methylsulfanyl-N(6)-dimethylallyladenosine(37) in tRNA + (sulfur carrier)-H + 5'-deoxyadenosine + L-methionine + A + S-adenosyl-L-homocysteine + 2 H(+). Functionally, catalyzes the methylthiolation of N6-(dimethylallyl)adenosine (i(6)A), leading to the formation of 2-methylthio-N6-(dimethylallyl)adenosine (ms(2)i(6)A) at position 37 in tRNAs that read codons beginning with uridine. This is tRNA-2-methylthio-N(6)-dimethylallyladenosine synthase from Buchnera aphidicola subsp. Schizaphis graminum (strain Sg).